The chain runs to 207 residues: Antitermination protein Q (207 aa).

The disordered stretch occupies residues 1–28 (MRLESVAKFHSPKSPMMSDSPRATASDS). 4 residues coordinate Zn(2+): C118, C121, C144, and C147. The segment at 118 to 147 (CRNCHGTGRAVDIAKTEQWGRVVEKECGRC) is a zinc-finger region. The DNA-binding element occupies 171 to 192 (LTQPTWSRTVKPLYDALVVQCH).

It belongs to the phage antitermination Q type 2 family. In terms of assembly, interacts with host RPOB (via flap domain); this interaction renders host RNAP resistant to transcription pausing and allows it to read through termination signals. Interacts with host RNA polymerase sigma factor RPOD (via domain-4). Interacts with host NusA (via N-terminus and AR2 domain); this interaction releases the autoinhibition of NusA.

Functionally, mediates the switch from middle to viral late gene expression by associating with host RNA polymerase (RNAP) so that the latter can read without pausing and through transcription terminators preceding late genes. Competes with host factor sigma 70 for binding to RPOB, the beta-subunit of host RNAP. To join the elongation complex, binds a specific DNA Q-binding element (QBE) and interacts with RNAP that is paused during early elongation. Participates in the lysis-lysogeny decision by activating the expression of the late lytic genes. The chain is Antitermination protein Q (23) from Salmonella typhimurium.